Reading from the N-terminus, the 264-residue chain is S-adenosylmethionine decarboxylase proenzyme (264 aa).

Ser113 functions as the Schiff-base intermediate with substrate; via pyruvic acid in the catalytic mechanism. Ser113 carries the pyruvic acid (Ser); by autocatalysis modification. His118 acts as the Proton acceptor; for processing activity in catalysis. The active-site Proton donor; for catalytic activity is the Cys141.

Belongs to the prokaryotic AdoMetDC family. Type 2 subfamily. Heterooctamer of four alpha and four beta chains arranged as a tetramer of alpha/beta heterodimers. It depends on pyruvate as a cofactor. Post-translationally, is synthesized initially as an inactive proenzyme. Formation of the active enzyme involves a self-maturation process in which the active site pyruvoyl group is generated from an internal serine residue via an autocatalytic post-translational modification. Two non-identical subunits are generated from the proenzyme in this reaction, and the pyruvate is formed at the N-terminus of the alpha chain, which is derived from the carboxyl end of the proenzyme. The post-translation cleavage follows an unusual pathway, termed non-hydrolytic serinolysis, in which the side chain hydroxyl group of the serine supplies its oxygen atom to form the C-terminus of the beta chain, while the remainder of the serine residue undergoes an oxidative deamination to produce ammonia and the pyruvoyl group blocking the N-terminus of the alpha chain.

The enzyme catalyses S-adenosyl-L-methionine + H(+) = S-adenosyl 3-(methylsulfanyl)propylamine + CO2. It participates in amine and polyamine biosynthesis; S-adenosylmethioninamine biosynthesis; S-adenosylmethioninamine from S-adenosyl-L-methionine: step 1/1. Catalyzes the decarboxylation of S-adenosylmethionine to S-adenosylmethioninamine (dcAdoMet), the propylamine donor required for the synthesis of the polyamines spermine and spermidine from the diamine putrescine. The sequence is that of S-adenosylmethionine decarboxylase proenzyme from Pseudomonas aeruginosa (strain ATCC 15692 / DSM 22644 / CIP 104116 / JCM 14847 / LMG 12228 / 1C / PRS 101 / PAO1).